The sequence spans 96 residues: HIG1 domain family member 1C (96 aa).

Residues 1–26 (MSSDEWSAAEDEGQLSRLLRKSRDSP) lie on the Cytoplasmic side of the membrane. An HIG1 domain is found at 1 to 91 (MSSDEWSAAE…YKDYIRPRFF (91 aa)). The helical transmembrane segment at 27-44 (FVPVGMAGFVAVLSYGLY) threads the bilayer. At 45-58 (KLNSRREQKMSLHL) the chain is on the extracellular side. The chain crosses the membrane as a helical span at residues 59 to 81 (IHVRVAAQGCVVGAVTLGVLYSM). Over 82-96 (YKDYIRPRFFNVPKK) the chain is Cytoplasmic.

Its subcellular location is the membrane. The chain is HIG1 domain family member 1C (Higd1c) from Mus musculus (Mouse).